A 1239-amino-acid polypeptide reads, in one-letter code: Zinc finger and BTB domain-containing protein 40 (1239 aa).

A BTB domain is found at 24–87; sequence CDCTISIGTI…MYTGKLPVGK (64 aa). 3 disordered regions span residues 130-231, 687-732, and 779-801; these read SAPS…TSTE, HLEA…PDPA, and KELD…PKKK. Residues 136–145 show a composition bias toward basic and acidic residues; sequence TFRKEPEKPQ. Residues 181–199 are compositionally biased toward polar residues; sequence SVSQEMSVNSPTAQESQRN. Phosphoserine is present on Ser-190. Residues 200–212 show a composition bias toward low complexity; the sequence is AETPAETPTTAEA. The span at 687 to 703 shows a compositional bias: basic and acidic residues; the sequence is HLEANNKEDEKAAKEDS. The residue at position 703 (Ser-703) is a Phosphoserine. The segment covering 705-719 has biased composition (polar residues); sequence PGEQNDQGETGSLPG. C2H2-type zinc fingers lie at residues 807-830, 836-858, 864-887, 893-915, 921-944, 950-973, 978-1000, 1006-1029, 1046-1069, and 1075-1098; these read VTCD…LTEH, FSCE…LRLH, FMCK…KKKH, YACQ…VRTH, YVCR…HTFH, YDCK…HEVH, HPCP…VVTH, FSCG…RTHH, LQCS…KAEH, and HECD…KCQH. Lys-1066 participates in a covalent cross-link: Glycyl lysine isopeptide (Lys-Gly) (interchain with G-Cter in SUMO2). A C2H2-type 11; atypical zinc finger spans residues 1104–1127; that stretch reads FRCLYCAATFRFPGALQHHVTTEH. The C2H2-type 12 zinc-finger motif lies at 1135–1158; the sequence is FPCELCGELFTSQAQLDSHLESEH.

This sequence belongs to the krueppel C2H2-type zinc-finger protein family.

The protein resides in the nucleus. Functionally, may be involved in transcriptional regulation. The chain is Zinc finger and BTB domain-containing protein 40 (ZBTB40) from Homo sapiens (Human).